A 391-amino-acid polypeptide reads, in one-letter code: GTPase Obg (391 aa).

The 159-residue stretch at 1–159 (MKFLDQAKIF…IWVWLRLKLI (159 aa)) folds into the Obg domain. Residues 160–327 (ADAGLIGLPN…VLRVMATHVD (168 aa)) enclose the OBG-type G domain. GTP-binding positions include 166-173 (GLPNAGKS), 191-195 (FTTLH), 212-215 (DIPG), 279-282 (SKID), and 308-310 (SAI). Mg(2+) is bound by residues Ser173 and Thr193. The interval 352–391 (TGIDHGYNRPSAVVDWEDAPFDDDDDDDGDESGDKGQWTR) is disordered. Residues 366-382 (DWEDAPFDDDDDDDGDE) show a composition bias toward acidic residues.

Belongs to the TRAFAC class OBG-HflX-like GTPase superfamily. OBG GTPase family. Monomer. It depends on Mg(2+) as a cofactor.

It is found in the cytoplasm. Its function is as follows. An essential GTPase which binds GTP, GDP and possibly (p)ppGpp with moderate affinity, with high nucleotide exchange rates and a fairly low GTP hydrolysis rate. Plays a role in control of the cell cycle, stress response, ribosome biogenesis and in those bacteria that undergo differentiation, in morphogenesis control. In Rhodospirillum rubrum (strain ATCC 11170 / ATH 1.1.1 / DSM 467 / LMG 4362 / NCIMB 8255 / S1), this protein is GTPase Obg.